Reading from the N-terminus, the 446-residue chain is Alpha-1,6-mannosyl-glycoprotein 2-beta-N-acetylglucosaminyltransferase (446 aa).

Topologically, residues 1-9 are cytoplasmic; it reads MRFRIYKRK. The helical; Signal-anchor for type II membrane protein transmembrane segment at 10–29 threads the bilayer; it reads VLILTFVVAACGFVLWSSNG. The Lumenal segment spans residues 30–446; that stretch reads RQRKNEALAP…ELCKSYRRLQ (417 aa). N69 and N86 each carry an N-linked (GlcNAc...) asparagine glycan. Residues 123–127 and D154 contribute to the substrate site; that span reads QVHNR. C196 and C210 form a disulfide bridge. A substrate-binding site is contributed by 229-233; that stretch reads QTKHH. D261 is a Mn(2+) binding site. A disulfide bridge links C283 with C286. Residue R298 coordinates substrate. Intrachain disulfides connect C334-C357, C339-C439, and C378-C386. Residue H374 participates in Mn(2+) binding.

Belongs to the glycosyltransferase 16 (GT16) protein family. Homodimer. It depends on Mn(2+) as a cofactor.

It localises to the golgi apparatus membrane. The enzyme catalyses an N(4)-{beta-D-GlcNAc-(1-&gt;2)-alpha-D-Man-(1-&gt;3)-[alpha-D-Man-(1-&gt;6)]-beta-D-Man-(1-&gt;4)-beta-D-GlcNAc-(1-&gt;4)-beta-D-GlcNAc}-L-asparaginyl-[protein] + UDP-N-acetyl-alpha-D-glucosamine = N(4)-{beta-D-GlcNAc-(1-&gt;2)-alpha-D-Man-(1-&gt;3)-[beta-D-GlcNAc-(1-&gt;2)-alpha-D-Man-(1-&gt;6)]-beta-D-Man-(1-&gt;4)-beta-D-GlcNAc-(1-&gt;4)-beta-D-GlcNAc}-L-asparaginyl-[protein] + UDP + H(+). It participates in protein modification; protein glycosylation. Plays an essential role in protein N-glycosylation. Catalyzes the transfer of N-acetylglucosamine (GlcNAc) onto the free terminal mannose moiety in the core structure of the nascent N-linked glycan chain, giving rise to the second branch in complex glycans. In Sus scrofa (Pig), this protein is Alpha-1,6-mannosyl-glycoprotein 2-beta-N-acetylglucosaminyltransferase (MGAT2).